A 133-amino-acid chain; its full sequence is Large-conductance mechanosensitive channel (133 aa).

The next 2 helical transmembrane spans lie at A17–F37 and I73–A93.

The protein belongs to the MscL family. As to quaternary structure, homopentamer.

It localises to the cell inner membrane. Channel that opens in response to stretch forces in the membrane lipid bilayer. May participate in the regulation of osmotic pressure changes within the cell. In Synechococcus elongatus (strain ATCC 33912 / PCC 7942 / FACHB-805) (Anacystis nidulans R2), this protein is Large-conductance mechanosensitive channel.